Reading from the N-terminus, the 519-residue chain is 2-isopropylmalate synthase (519 aa).

A Pyruvate carboxyltransferase domain is found at 5-267 (VIIFDTTLRD…TTNVNPMEIS (263 aa)). Mn(2+) is bound by residues aspartate 14, histidine 202, histidine 204, and asparagine 238. A regulatory domain region spans residues 392–519 (RLESINVQSG…KEQLIHIDQV (128 aa)).

This sequence belongs to the alpha-IPM synthase/homocitrate synthase family. LeuA type 1 subfamily. In terms of assembly, homodimer. Requires Mn(2+) as cofactor.

It is found in the cytoplasm. It catalyses the reaction 3-methyl-2-oxobutanoate + acetyl-CoA + H2O = (2S)-2-isopropylmalate + CoA + H(+). The protein operates within amino-acid biosynthesis; L-leucine biosynthesis; L-leucine from 3-methyl-2-oxobutanoate: step 1/4. In terms of biological role, catalyzes the condensation of the acetyl group of acetyl-CoA with 3-methyl-2-oxobutanoate (2-ketoisovalerate) to form 3-carboxy-3-hydroxy-4-methylpentanoate (2-isopropylmalate). This chain is 2-isopropylmalate synthase, found in Psychromonas ingrahamii (strain DSM 17664 / CCUG 51855 / 37).